The sequence spans 140 residues: Actin-depolymerizing factor 8 (140 aa).

Position 6 is a phosphoserine (serine 6). The 133-residue stretch at 7–139 folds into the ADF-H domain; that stretch reads GMHVNDECKI…SLDIIKGRLN (133 aa).

It belongs to the actin-binding proteins ADF family. Expressed in the root trichoblast cells and developed root hairs.

The protein resides in the cytoplasm. It localises to the cytoskeleton. Functionally, actin-depolymerizing protein. Severs actin filaments (F-actin) and binds to actin monomers. In Arabidopsis thaliana (Mouse-ear cress), this protein is Actin-depolymerizing factor 8 (ADF8).